We begin with the raw amino-acid sequence, 102 residues long: Small ribosomal subunit protein uS10 (102 aa).

This sequence belongs to the universal ribosomal protein uS10 family. As to quaternary structure, part of the 30S ribosomal subunit.

In terms of biological role, involved in the binding of tRNA to the ribosomes. The polypeptide is Small ribosomal subunit protein uS10 (Streptococcus suis (strain 98HAH33)).